A 328-amino-acid chain; its full sequence is MSMLAERRRKQKWAVDPQNTAWSNDDSKFGQRMLEKMGWSKGKGLGAQEQGATDHIKVQVKNNHLGLGATINNEDNWIAHQDDFNQLLAELNTCHGQETTDSSDKKEKKSFSLEEKSKISKNRVHYMKFTKGKDLSSRSKTDLDCIFGKRQSKKTPEGDASPSTPEENETTTTSAFTIQEYFAKRMAALKNKPQVPVPGSDISETQVERKRGKKRNKEATGKDVESYLQPKAKRHTEGKPERAEAQERVAKKKSAPAEEQLRGPCWDQSSKASAQDAGDHVQPPEGRDFTLKPKKRRGKKKLQKPVEIAEDATLEETLVKKKKKKDSK.

Disordered regions lie at residues 1–28, 147–177, and 189–307; these read MSML…DDSK, FGKR…SAFT, and LKNK…KPVE. Positions 26 to 72 constitute a G-patch domain; the sequence is DSKFGQRMLEKMGWSKGKGLGAQEQGATDHIKVQVKNNHLGLGATIN. Positions 161-174 are enriched in low complexity; it reads SPSTPEENETTTTS. Residues 235–261 are compositionally biased toward basic and acidic residues; that stretch reads HTEGKPERAEAQERVAKKKSAPAEEQL. Residues 254-328 form a telomerase inhibitory domain (TID) region; the sequence is SAPAEEQLRG…VKKKKKKDSK (75 aa). Phosphoserine is present on residues Ser270 and Ser273. Positions 287–297 match the TBM motif; sequence RDFTLKPKKRR. Basic residues predominate over residues 292–303; sequence KPKKRRGKKKLQ.

Belongs to the PINX1 family. As to quaternary structure, interacts with MCRS1, TERT, TERF1, NCL/nucleolin, and the telomerase RNA. Post-translationally, cleaved by enterovirus protease 3C to promote apoptosis. Ubiquitous; expressed at low levels. Not detectable in a number of hepatocarcinoma cell lines.

It localises to the nucleus. It is found in the nucleolus. The protein resides in the chromosome. Its subcellular location is the telomere. The protein localises to the centromere. It localises to the kinetochore. Functionally, microtubule-binding protein essential for faithful chromosome segregation. Mediates TRF1 and TERT accumulation in nucleolus and enhances TRF1 binding to telomeres. Inhibits telomerase activity. May inhibit cell proliferation and act as tumor suppressor. In Homo sapiens (Human), this protein is PIN2/TERF1-interacting telomerase inhibitor 1 (PINX1).